We begin with the raw amino-acid sequence, 572 residues long: Asparagine synthetase [glutamine-hydrolyzing] 1 (572 aa).

The active-site For GATase activity is the Cys2. One can recognise a Glutamine amidotransferase type-2 domain in the interval 2 to 186 (CGIFAAFRHE…PGHVYDSKTD (185 aa)). Residues 49–53 (RLAIV), 74–76 (NGE), and Asp97 contribute to the L-glutamine site. In terms of domain architecture, Asparagine synthetase spans 194-546 (PDWLDEKRIP…QKTVADTVMR (353 aa)). Leu233 provides a ligand contact to ATP. At Ser265 the chain carries Phosphoserine. ATP-binding positions include Ile292 and 366-367 (SG). Ser509 is subject to Phosphoserine.

It carries out the reaction L-aspartate + L-glutamine + ATP + H2O = L-asparagine + L-glutamate + AMP + diphosphate + H(+). It participates in amino-acid biosynthesis; L-asparagine biosynthesis; L-asparagine from L-aspartate (L-Gln route): step 1/1. In Saccharomyces cerevisiae (strain ATCC 204508 / S288c) (Baker's yeast), this protein is Asparagine synthetase [glutamine-hydrolyzing] 1 (ASN1).